The following is a 272-amino-acid chain: Centromere protein V-like protein 1 (272 aa).

Residues 1–17 (MGRVRNRATAQRRRRKR) are compositionally biased toward basic residues. 2 disordered regions span residues 1–23 (MGRV…DPPA) and 65–95 (RRVR…KDLD). Positions 79–90 (APTPDPPGPAPS) are enriched in pro residues. Residues 133-246 (HTGGCHCGAV…EEVGGGDPGE (114 aa)) form the CENP-V/GFA domain. Residues cysteine 137, cysteine 139, cysteine 157, cysteine 159, cysteine 162, cysteine 201, and cysteine 204 each contribute to the Zn(2+) site. A disordered region spans residues 240–272 (GGGDPGEEAAEEHKAIHKTSSQSAPACPREQEQ).

This sequence belongs to the Gfa family. Zn(2+) is required as a cofactor.

The sequence is that of Centromere protein V-like protein 1 from Homo sapiens (Human).